Consider the following 298-residue polypeptide: Fe(II)/2-oxoglutarate-dependent dioxygenase nvfF (298 aa).

Positions 137, 139, and 212 each coordinate Fe cation.

This sequence belongs to the PhyH family. As to quaternary structure, homodimer. It depends on Fe cation as a cofactor.

It carries out the reaction fumigatonoid C + 2-oxoglutarate + O2 = novofumigatonin + succinate + CO2 + H2O. The protein operates within secondary metabolite biosynthesis; terpenoid biosynthesis. Fe(II)/2-oxoglutarate-dependent dioxygenase; part of the gene cluster that mediates the biosynthesis of novofumigatonin, a heavily oxygenated meroterpenoid containing a unique orthoester moiety. The first step of the pathway is the synthesis of 3,5-dimethylorsellinic acid (DMOA) by the polyketide synthase nvfA via condensation of one acetyl-CoA starter unit with 3 malonyl-CoA units and 2 methylations. DMOA is then converted to farnesyl-DMOA by the farnesyltransferase nvfB. Epoxydation by FAD-dependent monooxygenase nvfK, followed by a protonation-initiated cyclization catalyzed by the terpene cyclase nvfL leads to the production of asnavolin H. The short chain dehydrogenase nvfC then as a 3-OH dehydrogenase of asnovolin H to yield chemesin D. There are two branches to synthesize asnovolin A from chemesin D. In one branch, chemesin D undergoes Baeyer-Villiger oxidation by nvfH, methylation by nvfJ, and enoyl reduction by the nvfM D enoylreductase that reduces the double bond between C-5'and C-6', to form respectively asnovolin I, asnovolin K, and asnovolin A. In the other branch, the methylation precedes the Baeyer-Villiger oxidation and the enoyl reduction to yield asnovolin A via the asnovolin J intermediate. Asnovolin A is further converted to fumigatonoid A by the Fe(II)/2-oxoglutarate-dependent dioxygenase nvfI that catalyzes an endoperoxidation reaction. The alpha/beta hydrolase nvfD then acts as an epimerase that converts fumigatonoid A to its C-5' epimer, which then undergoes spontaneous or nvfD-catalyzed lactonization. The following step utilizes the ketoreductase nvfG to produce fumigatonoid B. The dioxygenase nvfE further converts fumigatonoid B into fumigatonoid C. Finally the Fe(II)/2-oxoglutarate-dependent dioxygenase nvfF catalyzes two rounds of oxidation to transform fumigatonoid C into the end product, novofumigatonin A. The polypeptide is Fe(II)/2-oxoglutarate-dependent dioxygenase nvfF (Aspergillus novofumigatus (strain IBT 16806)).